A 138-amino-acid chain; its full sequence is Nucleoside diphosphate kinase (138 aa).

Residues Lys10, Phe58, Arg86, Thr92, Arg103, and Asn113 each contribute to the ATP site. His116 functions as the Pros-phosphohistidine intermediate in the catalytic mechanism.

This sequence belongs to the NDK family. In terms of assembly, homotetramer. Requires Mg(2+) as cofactor.

Its subcellular location is the cytoplasm. The catalysed reaction is a 2'-deoxyribonucleoside 5'-diphosphate + ATP = a 2'-deoxyribonucleoside 5'-triphosphate + ADP. It catalyses the reaction a ribonucleoside 5'-diphosphate + ATP = a ribonucleoside 5'-triphosphate + ADP. In terms of biological role, major role in the synthesis of nucleoside triphosphates other than ATP. The ATP gamma phosphate is transferred to the NDP beta phosphate via a ping-pong mechanism, using a phosphorylated active-site intermediate. This is Nucleoside diphosphate kinase from Actinobacillus pleuropneumoniae serotype 7 (strain AP76).